A 1054-amino-acid polypeptide reads, in one-letter code: FERM, ARHGEF and pleckstrin domain-containing protein 2 (1054 aa).

Positions 44–324 (LHLRVKLLDN…EYHTFFRLLD (281 aa)) constitute an FERM domain. Phosphoserine is present on residues serine 389 and serine 439. Residues 421 to 527 (EFKDSSSSLT…GAGMDCEEPR (107 aa)) are disordered. Positions 468–492 (PGPGLSTKSPQPSPSSRKSPLSLSP) are enriched in low complexity. The DH domain maps to 535–726 (EAYFIVKEIL…TEVTTTLQHI (192 aa)). The region spanning 755–852 (EFIREGCLHK…WMLDLNSAIQ (98 aa)) is the PH 1 domain. The disordered stretch occupies residues 856–894 (SGGDTAPALPGRTVCTRPPRSPNEVSLEQESEDDARGVR). The region spanning 929–1026 (ENQLSGYLLR…WMEVIQGASS (98 aa)) is the PH 2 domain. A disordered region spans residues 1029–1054 (GRAPSIVQDGPQPSSGLEGMVRGKEE).

Interacts with PLXNA1. Interaction with PLXNA1 or PIP5K1C lowers its guanine nucleotide exchange activity. Dissociates from PLXNA1 when SEMA3A binds to the receptor. Interacts with PIP5K1C via its FERM domain. The interaction with PIP5K1C is enhanced by SEMA3A binding. Interacts with RAC1.

Its function is as follows. Functions as a guanine nucleotide exchange factor that activates RAC1. May have relatively low activity. Plays a role in the response to class 3 semaphorins and remodeling of the actin cytoskeleton. Plays a role in TNFSF11-mediated osteoclast differentiation, especially in podosome rearrangement and reorganization of the actin cytoskeleton. Regulates the activation of ITGB3, integrin signaling and cell adhesion. The sequence is that of FERM, ARHGEF and pleckstrin domain-containing protein 2 (FARP2) from Homo sapiens (Human).